The sequence spans 202 residues: MCSSKCTRYIGHSLVVFAVLCIVANILLYFPNGETKYAYEDHLSRFVWFFAGIVGGGLLILLPAFVFLGLEGEDCCGCWSCENYGKRCTMLSSIMAALIGIAGSGYCVIVAALGLAEGPKCGDSHGMWNYTFANTDGQYLLDPTTWSKCHEPNNIVEWNVTLFSILLALGGLEFILCLIQVINGVLEGMCSYCCSHQQQYDC.

Residues Met-1–Tyr-9 are Cytoplasmic-facing. Residues Ile-10–Phe-30 form a helical membrane-spanning segment. The Extracellular segment spans residues Pro-31 to Phe-49. A helical transmembrane segment spans residues Phe-50–Leu-70. At Glu-71–Ser-93 the chain is on the cytoplasmic side. Residues Ile-94–Gly-114 form a helical membrane-spanning segment. Over Leu-115–Thr-161 the chain is Extracellular. N-linked (GlcNAc...) asparagine glycans are attached at residues Asn-129 and Asn-159. The helical transmembrane segment at Leu-162–Ile-182 threads the bilayer. The Cytoplasmic segment spans residues Asn-183–Cys-202.

The protein belongs to the L6 tetraspanin family. Present in high molecular weight complexes in tumor cells. Interacts with SDCBP2.

The protein resides in the membrane. This is Transmembrane 4 L6 family member 1 (TM4SF1) from Mesocricetus auratus (Golden hamster).